The following is a 226-amino-acid chain: PKHD-type hydroxylase Daci_1172 (226 aa).

Positions 78–178 (KVLPPRFNRY…RYASFFWTHS (101 aa)) constitute a Fe2OG dioxygenase domain. Residues histidine 96, aspartate 98, and histidine 159 each contribute to the Fe cation site. Arginine 169 contacts 2-oxoglutarate.

Requires Fe(2+) as cofactor. The cofactor is L-ascorbate.

This Delftia acidovorans (strain DSM 14801 / SPH-1) protein is PKHD-type hydroxylase Daci_1172.